Reading from the N-terminus, the 31-residue chain is Zinc metalloproteinase alsophinase (31 aa).

The residue at position 1 (Gln1) is a Pyrrolidone carboxylic acid. One can recognise a Peptidase M12B domain in the interval 9 to 31; the sequence is KYIEFYLVVDNGMFXKYSXXFTV. Ca(2+) is bound at residue Glu12.

In terms of assembly, monomer. The cofactor is Zn(2+). Post-translationally, contains 9 disulfide bonds. Expressed by the venom gland.

The protein resides in the secreted. With respect to regulation, inhibited by 1,10-phenanthroline. Snake venom zinc metalloprotease that has potent hemorrhagic activity, fibrinogenolytic activity on the alpha-subunit of human fibrinogen (FGA) in vitro and provokes necrosis in skin, muscle and lung tissues. May contribute to local edema and ecchymosis induced by venom. Hydrolyzes model substrate (beta-chain of insulin) at Ala(14)-Leu(15). The chain is Zinc metalloproteinase alsophinase from Borikenophis portoricensis (Puerto Rican racer).